The primary structure comprises 374 residues: Peptide chain release factor 2 (374 aa).

Gln-252 is subject to N5-methylglutamine.

This sequence belongs to the prokaryotic/mitochondrial release factor family. In terms of processing, methylated by PrmC. Methylation increases the termination efficiency of RF2.

The protein resides in the cytoplasm. Its function is as follows. Peptide chain release factor 2 directs the termination of translation in response to the peptide chain termination codons UGA and UAA. The chain is Peptide chain release factor 2 from Xanthomonas euvesicatoria pv. vesicatoria (strain 85-10) (Xanthomonas campestris pv. vesicatoria).